A 381-amino-acid polypeptide reads, in one-letter code: N-acetyldiaminopimelate deacetylase (381 aa).

The active site involves Asp73. The Proton acceptor role is filled by Glu132.

Belongs to the peptidase M20A family. N-acetyldiaminopimelate deacetylase subfamily.

It carries out the reaction N-acetyl-(2S,6S)-2,6-diaminopimelate + H2O = (2S,6S)-2,6-diaminopimelate + acetate. The protein operates within amino-acid biosynthesis; L-lysine biosynthesis via DAP pathway; LL-2,6-diaminopimelate from (S)-tetrahydrodipicolinate (acetylase route): step 3/3. Its function is as follows. Catalyzes the conversion of N-acetyl-diaminopimelate to diaminopimelate and acetate. In Limosilactobacillus reuteri (strain DSM 20016) (Lactobacillus reuteri), this protein is N-acetyldiaminopimelate deacetylase.